The chain runs to 404 residues: NADH-quinone oxidoreductase subunit D (404 aa).

This sequence belongs to the complex I 49 kDa subunit family. As to quaternary structure, NDH-1 is composed of 14 different subunits. Subunits NuoB, C, D, E, F, and G constitute the peripheral sector of the complex.

The protein localises to the cell inner membrane. The catalysed reaction is a quinone + NADH + 5 H(+)(in) = a quinol + NAD(+) + 4 H(+)(out). In terms of biological role, NDH-1 shuttles electrons from NADH, via FMN and iron-sulfur (Fe-S) centers, to quinones in the respiratory chain. The immediate electron acceptor for the enzyme in this species is believed to be ubiquinone. Couples the redox reaction to proton translocation (for every two electrons transferred, four hydrogen ions are translocated across the cytoplasmic membrane), and thus conserves the redox energy in a proton gradient. The sequence is that of NADH-quinone oxidoreductase subunit D from Dinoroseobacter shibae (strain DSM 16493 / NCIMB 14021 / DFL 12).